A 439-amino-acid polypeptide reads, in one-letter code: Tol-Pal system protein TolB (439 aa).

The first 22 residues, 1–22 (MTKFPRWLAMLVGLLFPLSALT), serve as a signal peptide directing secretion.

This sequence belongs to the TolB family. The Tol-Pal system is composed of five core proteins: the inner membrane proteins TolA, TolQ and TolR, the periplasmic protein TolB and the outer membrane protein Pal. They form a network linking the inner and outer membranes and the peptidoglycan layer.

Its subcellular location is the periplasm. In terms of biological role, part of the Tol-Pal system, which plays a role in outer membrane invagination during cell division and is important for maintaining outer membrane integrity. In Xylella fastidiosa (strain 9a5c), this protein is Tol-Pal system protein TolB.